We begin with the raw amino-acid sequence, 156 residues long: MSRRNTAKKRFASPDPLYKSRLVSMLTVRILKSGKKTLAQRIIYQALDIVKERTETDPLNVLEKAIRNITPLVEVKARRVGGSTYQVPIEVRAYRGTNLALRWITRFSRERSGKSMSMKLANEIMDAANETGNSIRKREETHRMAEANKAFAHYRY.

This sequence belongs to the universal ribosomal protein uS7 family. In terms of assembly, part of the 30S ribosomal subunit.

It localises to the plastid. The protein localises to the chloroplast. Its function is as follows. One of the primary rRNA binding proteins, it binds directly to 16S rRNA where it nucleates assembly of the head domain of the 30S subunit. This chain is Small ribosomal subunit protein uS7c (rps7), found in Porphyra purpurea (Red seaweed).